Reading from the N-terminus, the 2266-residue chain is RNA1 polyprotein (2266 aa).

Residues 566–1158 lie on the Cytoplasmic side of the membrane; it reads LCTALAAGIF…AGRDYLVQNG (593 aa). An SF3 helicase domain is found at 751–917; sequence MKDLVELHKR…PGVIYDPENP (167 aa). 781-788 is a binding site for ATP; sequence GQRHCGKS. Residues 1159–1179 traverse the membrane as a helical segment; sequence CGILMIAAALILILVSGWGFW. The Lumenal segment spans residues 1180–1205; sequence KLFVGLFSGTMSLGAAITGMSAVDIK. A Peptidase C3 domain is found at 1229–1438; it reads AYARSQAGDG…WADIMPPNSL (210 aa). Active-site for picornain 3C-like protease activity residues include His1272, Glu1310, and Cys1402. Residues 1715-1843 enclose the RdRp catalytic domain; it reads NEAINCDYSG…SVSPSIASWF (129 aa).

Belongs to the nepoviruses RNA1 polyprotein family. Post-translationally, specific enzymatic cleavages by picornain 3C-like protease in vivo yield mature proteins. Picornain 3C-like protease is autocatalytically processed. In terms of processing, VPg is uridylylated by the polymerase and is covalently linked to the 5'-end of genomic RNA. This uridylylated form acts as a nucleotide-peptide primer for the polymerase.

It is found in the host endoplasmic reticulum lumen. The protein resides in the host endoplasmic reticulum membrane. It carries out the reaction RNA(n) + a ribonucleoside 5'-triphosphate = RNA(n+1) + diphosphate. Functionally, picornain 3C-like protease is a thiol protease that cleaves the P1 and P2 polyproteins. The protein is RNA1 polyprotein of Tomato black ring virus (strain MJ) (TBRV).